The sequence spans 135 residues: Holo-[acyl-carrier-protein] synthase (135 aa).

Positions 8 and 58 each coordinate Mg(2+).

This sequence belongs to the P-Pant transferase superfamily. AcpS family. Requires Mg(2+) as cofactor.

Its subcellular location is the cytoplasm. The catalysed reaction is apo-[ACP] + CoA = holo-[ACP] + adenosine 3',5'-bisphosphate + H(+). In terms of biological role, transfers the 4'-phosphopantetheine moiety from coenzyme A to a Ser of acyl-carrier-protein. The protein is Holo-[acyl-carrier-protein] synthase of Leuconostoc citreum (strain KM20).